A 240-amino-acid chain; its full sequence is uncharacterized protein (240 aa).

2 disordered regions span residues 99 to 121 and 136 to 167; these read EPPT…SPEL and ATVS…KRVH. Residues 137 to 155 are compositionally biased toward polar residues; that stretch reads TVSSPTSPRPITTESSRVS.

This is an uncharacterized protein from Ictaluridae (bullhead catfishes).